A 618-amino-acid polypeptide reads, in one-letter code: Grainyhead-like protein 1 homolog (618 aa).

The segment at methionine 1–serine 91 is transcription activation. The segment covering serine 76–lysine 92 has biased composition (basic and acidic residues). The interval serine 76–threonine 100 is disordered. Threonine 208 is modified (phosphothreonine). Residues serine 248 to isoleucine 474 form the Grh/CP2 DB domain. Interaction with DNA regions lie at residues threonine 380–lysine 389 and arginine 427–arginine 430.

The protein belongs to the grh/CP2 family. Grainyhead subfamily. In terms of assembly, binds DNA as homodimer. Homodimer, also forms heterodimers with GRHL2 or GRHL3. In terms of processing, methylation at Arg-9 and Lys-116 may be involved in regulating transcriptional activation. In terms of tissue distribution, isoform 1 is highly expressed in brain, pancreas, tonsil, placenta and kidney. Isoform 2 is highly expressed in brain and liver. Expression in the skin is confined to the suprabasal layers of the epidermis and to the hair follicles.

Its subcellular location is the nucleus. Transcription factor involved in epithelial development. Binds directly to the consensus DNA sequence 5'-AACCGGTT-3'. Important regulator of DSG1 in the context of hair anchorage and epidermal differentiation, participates in the maintenance of the skin barrier. There is no genetic interaction with GRHL3, nor functional cooperativity due to diverse target gene selectivity during epithelia development. May play a role in regulating glucose homeostasis and insulin signaling. This chain is Grainyhead-like protein 1 homolog, found in Mus musculus (Mouse).